The sequence spans 226 residues: Glycerol-3-phosphate acyltransferase (226 aa).

6 helical membrane-spanning segments follow: residues 1–21 (MGFW…LGSF), 60–80 (FVLG…YYLF), 102–122 (LVTL…FLGF), 134–154 (ILLA…AVVV), 159–178 (IVSL…MVFL), and 182–197 (LPYI…YVIL).

This sequence belongs to the PlsY family. In terms of assembly, probably interacts with PlsX.

The protein localises to the cell inner membrane. The catalysed reaction is an acyl phosphate + sn-glycerol 3-phosphate = a 1-acyl-sn-glycero-3-phosphate + phosphate. It participates in lipid metabolism; phospholipid metabolism. Functionally, catalyzes the transfer of an acyl group from acyl-phosphate (acyl-PO(4)) to glycerol-3-phosphate (G3P) to form lysophosphatidic acid (LPA). This enzyme utilizes acyl-phosphate as fatty acyl donor, but not acyl-CoA or acyl-ACP. This Nostoc sp. (strain PCC 7120 / SAG 25.82 / UTEX 2576) protein is Glycerol-3-phosphate acyltransferase.